Reading from the N-terminus, the 602-residue chain is Elongation factor 4 (602 aa).

One can recognise a tr-type G domain in the interval 7–189 (KFIRNFSIIA…QLVVAIPPPV (183 aa)). GTP is bound by residues 19–24 (DHGKST) and 136–139 (NKID).

This sequence belongs to the TRAFAC class translation factor GTPase superfamily. Classic translation factor GTPase family. LepA subfamily.

Its subcellular location is the cell inner membrane. It catalyses the reaction GTP + H2O = GDP + phosphate + H(+). In terms of biological role, required for accurate and efficient protein synthesis under certain stress conditions. May act as a fidelity factor of the translation reaction, by catalyzing a one-codon backward translocation of tRNAs on improperly translocated ribosomes. Back-translocation proceeds from a post-translocation (POST) complex to a pre-translocation (PRE) complex, thus giving elongation factor G a second chance to translocate the tRNAs correctly. Binds to ribosomes in a GTP-dependent manner. This chain is Elongation factor 4, found in Coxiella burnetii (strain Dugway 5J108-111).